We begin with the raw amino-acid sequence, 156 residues long: Rhodanese-like domain-containing protein 17 (156 aa).

One can recognise a Rhodanese domain in the interval 44–146; sequence LDSGYTFLDV…WVNKRFPVKV (103 aa). The active-site Cysteine persulfide intermediate is the Cys-106.

The protein is Rhodanese-like domain-containing protein 17 (STR17) of Arabidopsis thaliana (Mouse-ear cress).